The following is an 830-amino-acid chain: AdoMet-dependent rRNA methyltransferase SPB1 (830 aa).

S-adenosyl-L-methionine contacts are provided by Gly-58, Trp-60, Asp-78, Asp-94, and Asp-119. Lys-159 functions as the Proton acceptor in the catalytic mechanism. The stretch at 345–388 forms a coiled coil; the sequence is LTEEEQIEKELQEMQQKQNLKKKREKRKQNEIKQKEITRMQMQM. Disordered regions lie at residues 485 to 529 and 565 to 642; these read AKEA…SDSD and EADL…AREV. Composition is skewed to acidic residues over residues 516–529, 591–610, and 618–630; these read VDDD…SDSD, VSEE…DSDF, and DESD…EDEA. Positions 631-642 are enriched in basic and acidic residues; sequence ERSQKEKHAREV.

Belongs to the class I-like SAM-binding methyltransferase superfamily. RNA methyltransferase RlmE family. SPB1 subfamily. As to quaternary structure, component of the nucleolar and nucleoplasmic pre-60S ribosomal particle.

The protein localises to the nucleus. The protein resides in the nucleolus. It carries out the reaction a ribonucleotide in rRNA + S-adenosyl-L-methionine = a 2'-O-methylribonucleotide in rRNA + S-adenosyl-L-homocysteine + H(+). Required for proper assembly of pre-ribosomal particles during the biogenesis of the 60S ribosomal subunit. This chain is AdoMet-dependent rRNA methyltransferase SPB1, found in Eremothecium gossypii (strain ATCC 10895 / CBS 109.51 / FGSC 9923 / NRRL Y-1056) (Yeast).